Here is a 963-residue protein sequence, read N- to C-terminus: VPS35 endosomal protein-sorting factor-like (963 aa).

The disordered stretch occupies residues 43–69 (SKTKKVNRKGSTSSTSSSSSSSVVDPL). A compositionally biased stretch (low complexity) spans 53–69 (STSSTSSSSSSSVVDPL). Position 265 is a phosphoserine (Ser265). A helical membrane pass occupies residues 703–719 (ACVAYCFITIPSLAGIF).

The protein belongs to the VPS35L family. In terms of assembly, component of the heterotrimeric retriever complex formed by VPS26C, VPS29 and VPS35L. Interacts with VPS29. Interacts with COMMD1, CCDC93 and CCDC22; associates with the CCC (COMMD/CCDC22/CCDC93) complex which contains at least COMMD1 (and possibly other COMM domain-containing proteins), CCDC22 and CCDC93. Interacts with WASHC1, WASHC2A and WASHC2C. Interacts with SNX17 and SNX31.

Its subcellular location is the membrane. It is found in the endosome. Acts as a component of the retriever complex. The retriever complex is a heterotrimeric complex related to retromer cargo-selective complex (CSC) and essential for retromer-independent retrieval and recycling of numerous cargos such as integrin alpha-5/beta-1 (ITGA5:ITGB1). The recruitment of the retriever complex to the endosomal membrane involves CCC and WASH complexes. In the endosomes, drives the retrieval and recycling of NxxY-motif-containing cargo proteins by coupling to SNX17, a cargo essential for the homeostatic maintenance of numerous cell surface proteins associated with processes that include cell migration, cell adhesion, nutrient supply and cell signaling. Involved in copper-dependent ATP7A trafficking between the trans-Golgi network and vesicles in the cell periphery; the function is proposed to depend on its association with the CCC complex and cooperation with the WASH complex on early endosomes. Seems not to be required for CCC complex stability. Its function is as follows. (Microbial infection) The heterotrimeric retriever complex, in collaboration with the CCC complex, mediates the exit of human papillomavirus to the cell surface. In Homo sapiens (Human), this protein is VPS35 endosomal protein-sorting factor-like.